A 226-amino-acid polypeptide reads, in one-letter code: Ribose-5-phosphate isomerase A (226 aa).

Substrate is bound by residues 33–36, 86–89, and 99–102; these read TGST, DGAD, and KGGG. The active-site Proton acceptor is the E108. Residue K126 coordinates substrate.

It belongs to the ribose 5-phosphate isomerase family. As to quaternary structure, homodimer.

It catalyses the reaction aldehydo-D-ribose 5-phosphate = D-ribulose 5-phosphate. Its pathway is carbohydrate degradation; pentose phosphate pathway; D-ribose 5-phosphate from D-ribulose 5-phosphate (non-oxidative stage): step 1/1. Catalyzes the reversible conversion of ribose-5-phosphate to ribulose 5-phosphate. The protein is Ribose-5-phosphate isomerase A of Bordetella parapertussis (strain 12822 / ATCC BAA-587 / NCTC 13253).